The chain runs to 199 residues: Recombination protein RecR (199 aa).

The C4-type zinc-finger motif lies at cysteine 57–cysteine 72. One can recognise a Toprim domain in the interval serine 80–proline 175.

This sequence belongs to the RecR family.

Its function is as follows. May play a role in DNA repair. It seems to be involved in an RecBC-independent recombinational process of DNA repair. It may act with RecF and RecO. The protein is Recombination protein RecR of Moorella thermoacetica (strain ATCC 39073 / JCM 9320).